The chain runs to 108 residues: UPF0060 membrane protein BLi00854/BL03049 (108 aa).

The next 4 helical transmembrane spans lie at 3-23 (IAIG…YLVW), 31-51 (PLWY…IPAF), 60-80 (VYAA…WLVD), and 86-106 (LYDW…LWAP).

It belongs to the UPF0060 family.

It is found in the cell membrane. This chain is UPF0060 membrane protein BLi00854/BL03049, found in Bacillus licheniformis (strain ATCC 14580 / DSM 13 / JCM 2505 / CCUG 7422 / NBRC 12200 / NCIMB 9375 / NCTC 10341 / NRRL NRS-1264 / Gibson 46).